Reading from the N-terminus, the 213-residue chain is Putative protein Brevis radix-like 3 (213 aa).

Residues 7 to 27 (CSSKEGGEDGSRGAATPHGRD) are disordered. The BRX domain maps to 158-213 (REWTAQVEPGVQITFVTLPGGGNDLKRIRFSRERFGEDRAKVWWEHNRDRIQAQYL).

Belongs to the BRX family.

The protein localises to the nucleus. The chain is Putative protein Brevis radix-like 3 (BRXL3) from Oryza sativa subsp. japonica (Rice).